The chain runs to 341 residues: UDP-N-acetylenolpyruvoylglucosamine reductase (341 aa).

In terms of domain architecture, FAD-binding PCMH-type spans Val15 to Ala185. Arg161 is an active-site residue. Ser231 acts as the Proton donor in catalysis. Residue Glu327 is part of the active site.

The protein belongs to the MurB family. FAD serves as cofactor.

Its subcellular location is the cytoplasm. It catalyses the reaction UDP-N-acetyl-alpha-D-muramate + NADP(+) = UDP-N-acetyl-3-O-(1-carboxyvinyl)-alpha-D-glucosamine + NADPH + H(+). It participates in cell wall biogenesis; peptidoglycan biosynthesis. Cell wall formation. The sequence is that of UDP-N-acetylenolpyruvoylglucosamine reductase from Shewanella sp. (strain ANA-3).